Here is a 180-residue protein sequence, read N- to C-terminus: Large ribosomal subunit protein uL5 (180 aa).

Belongs to the universal ribosomal protein uL5 family. As to quaternary structure, part of the 50S ribosomal subunit; part of the 5S rRNA/L5/L18/L25 subcomplex. Contacts the 5S rRNA and the P site tRNA. Forms a bridge to the 30S subunit in the 70S ribosome.

This is one of the proteins that bind and probably mediate the attachment of the 5S RNA into the large ribosomal subunit, where it forms part of the central protuberance. In the 70S ribosome it contacts protein S13 of the 30S subunit (bridge B1b), connecting the 2 subunits; this bridge is implicated in subunit movement. Contacts the P site tRNA; the 5S rRNA and some of its associated proteins might help stabilize positioning of ribosome-bound tRNAs. This chain is Large ribosomal subunit protein uL5, found in Limosilactobacillus fermentum (strain NBRC 3956 / LMG 18251) (Lactobacillus fermentum).